Consider the following 196-residue polypeptide: Peptidyl-tRNA hydrolase (196 aa).

TRNA is bound at residue Y18. H23 functions as the Proton acceptor in the catalytic mechanism. Residues F69, N71, and N117 each coordinate tRNA.

This sequence belongs to the PTH family. In terms of assembly, monomer.

It is found in the cytoplasm. It catalyses the reaction an N-acyl-L-alpha-aminoacyl-tRNA + H2O = an N-acyl-L-amino acid + a tRNA + H(+). Its function is as follows. Hydrolyzes ribosome-free peptidyl-tRNAs (with 1 or more amino acids incorporated), which drop off the ribosome during protein synthesis, or as a result of ribosome stalling. Catalyzes the release of premature peptidyl moieties from peptidyl-tRNA molecules trapped in stalled 50S ribosomal subunits, and thus maintains levels of free tRNAs and 50S ribosomes. This is Peptidyl-tRNA hydrolase from Aliivibrio salmonicida (strain LFI1238) (Vibrio salmonicida (strain LFI1238)).